Reading from the N-terminus, the 359-residue chain is MRNFISIKELSKEEVIEVLDVAKELDNADSKERRKIMDGMIMTSIFFEPSTRTRLSFTSAAYRLGCKELGFDNPEQSSVKKGESLRDTIIMVSAYSDIIVMRHSIDGAAKFAEEVTNCPIINAGDGANEHPSQTLLDLYTLREELGTIENQKVAFVGDTRYGRTVHSLVDGLMMFNGQFYFISPDVIQIPDYILKELDNANIKYKKLSNYEEVLKEIDCLYMTRVQRERFDDINEYEEVKHAFRISKDNIVGKCKDDMIILHPLPRVDEINIDLDDTKYAKYFIQARNGVPTRMAMMALATDAIKSKVKRKEMNYEVVENKEVVCPNNKCVTHFEETKNRVVKKGYGDFCYYCNREIGK.

Residues Arg-52 and Thr-53 each coordinate carbamoyl phosphate. Lys-81 is an L-aspartate binding site. Carbamoyl phosphate contacts are provided by Arg-102, His-130, and Gln-133. The L-aspartate site is built by Arg-163 and Arg-224. Carbamoyl phosphate-binding residues include Leu-264 and Pro-265.

Belongs to the aspartate/ornithine carbamoyltransferase superfamily. ATCase family. Heterododecamer (2C3:3R2) of six catalytic PyrB chains organized as two trimers (C3), and six regulatory PyrI chains organized as three dimers (R2).

The catalysed reaction is carbamoyl phosphate + L-aspartate = N-carbamoyl-L-aspartate + phosphate + H(+). It functions in the pathway pyrimidine metabolism; UMP biosynthesis via de novo pathway; (S)-dihydroorotate from bicarbonate: step 2/3. Its function is as follows. Catalyzes the condensation of carbamoyl phosphate and aspartate to form carbamoyl aspartate and inorganic phosphate, the committed step in the de novo pyrimidine nucleotide biosynthesis pathway. The chain is Aspartate carbamoyltransferase catalytic subunit from Brachyspira hyodysenteriae (strain ATCC 49526 / WA1).